The sequence spans 216 residues: Elongation factor Ts (216 aa).

Residues 81 to 84 (TDFV) are involved in Mg(2+) ion dislocation from EF-Tu.

It belongs to the EF-Ts family.

The protein resides in the cytoplasm. In terms of biological role, associates with the EF-Tu.GDP complex and induces the exchange of GDP to GTP. It remains bound to the aminoacyl-tRNA.EF-Tu.GTP complex up to the GTP hydrolysis stage on the ribosome. The chain is Elongation factor Ts from Citrifermentans bemidjiense (strain ATCC BAA-1014 / DSM 16622 / JCM 12645 / Bem) (Geobacter bemidjiensis).